A 414-amino-acid polypeptide reads, in one-letter code: Esterase FrsA (414 aa).

Belongs to the FrsA family.

The catalysed reaction is a carboxylic ester + H2O = an alcohol + a carboxylate + H(+). Catalyzes the hydrolysis of esters. The polypeptide is Esterase FrsA (Salmonella dublin (strain CT_02021853)).